The chain runs to 345 residues: uncharacterized protein (345 aa).

A domain (TBDR plug) is located at residue Met-1. Residues 1–345 (MDLGPIYNTR…EVILNTKIEF (345 aa)) enclose the TBDR beta-barrel domain. The TonB C-terminal box signature appears at 328–345 (PVALGYAREVILNTKIEF).

The protein belongs to the TonB-dependent receptor family.

It is found in the cell outer membrane. This is an uncharacterized protein from Haemophilus influenzae (strain ATCC 51907 / DSM 11121 / KW20 / Rd).